A 325-amino-acid polypeptide reads, in one-letter code: Probable cell division protein WhiA (325 aa).

A DNA-binding region (H-T-H motif) is located at residues 273–306 (SLEELGALADPPLTKDAVAGRIRRLLALADKRAN).

It belongs to the WhiA family.

Involved in cell division and chromosome segregation. This Frankia alni (strain DSM 45986 / CECT 9034 / ACN14a) protein is Probable cell division protein WhiA.